The following is a 293-amino-acid chain: Germ cell-specific gene 1-like protein 2 (293 aa).

Over 1 to 8 (MDRAKQQQ) the chain is Cytoplasmic. The chain crosses the membrane as a helical span at residues 9–29 (ALLLLPVCLALTFSLTAVVSS). Residues 30–120 (HWCEGTRRVV…RSVVPAEEQG (91 aa)) are Extracellular-facing. N-linked (GlcNAc...) asparagine glycosylation is found at asparagine 59 and asparagine 67. Residues 121-141 (VLWLSIGGEVLDIVLILTSAI) form a helical membrane-spanning segment. The Cytoplasmic portion of the chain corresponds to 142 to 160 (LLGSRVSCRSPGFHWLRVD). A helical transmembrane segment spans residues 161–181 (ALVAIFMVLAGLLGMVAHMMY). Over 182-204 (TTIFQITVNLGPEDWKPQTWDYG) the chain is Extracellular. The chain crosses the membrane as a helical span at residues 205 to 225 (WSYCLAWGSFALCLAVSVSAM). At 226 to 293 (SRFTAARLEF…PGAPGKVSIC (68 aa)) the chain is on the cytoplasmic side.

The protein belongs to the GSG1 family.

The protein resides in the membrane. In Homo sapiens (Human), this protein is Germ cell-specific gene 1-like protein 2.